A 951-amino-acid chain; its full sequence is Glycine dehydrogenase (decarboxylating) (951 aa).

Lysine 709 is subject to N6-(pyridoxal phosphate)lysine.

Belongs to the GcvP family. As to quaternary structure, the glycine cleavage system is composed of four proteins: P, T, L and H. Pyridoxal 5'-phosphate is required as a cofactor.

It catalyses the reaction N(6)-[(R)-lipoyl]-L-lysyl-[glycine-cleavage complex H protein] + glycine + H(+) = N(6)-[(R)-S(8)-aminomethyldihydrolipoyl]-L-lysyl-[glycine-cleavage complex H protein] + CO2. Functionally, the glycine cleavage system catalyzes the degradation of glycine. The P protein binds the alpha-amino group of glycine through its pyridoxal phosphate cofactor; CO(2) is released and the remaining methylamine moiety is then transferred to the lipoamide cofactor of the H protein. The polypeptide is Glycine dehydrogenase (decarboxylating) (Gluconobacter oxydans (strain 621H) (Gluconobacter suboxydans)).